The sequence spans 119 residues: Large ribosomal subunit protein bL19 (119 aa).

The protein belongs to the bacterial ribosomal protein bL19 family.

Its function is as follows. This protein is located at the 30S-50S ribosomal subunit interface and may play a role in the structure and function of the aminoacyl-tRNA binding site. In Photobacterium profundum (strain SS9), this protein is Large ribosomal subunit protein bL19.